We begin with the raw amino-acid sequence, 71 residues long: Prokaryotic ubiquitin-like protein Pup (71 aa).

The tract at residues 1-30 (MPSASGHHQIPAETQRHDDDQTQETAQGLS) is disordered. The stretch at 23–56 (QETAQGLSAAAMLAQEQADDLDAILDDIETVLET) forms a coiled coil. Positions 27–65 (QGLSAAAMLAQEQADDLDAILDDIETVLETNAEEYVSSF) are ARC ATPase binding. E71 is covalently cross-linked (Isoglutamyl lysine isopeptide (Glu-Lys) (interchain with K-? in acceptor proteins)).

Belongs to the prokaryotic ubiquitin-like protein family. As to quaternary structure, strongly interacts with the proteasome-associated ATPase ARC through a hydrophobic interface; the interacting region of Pup lies in its C-terminal half. There is one Pup binding site per ARC hexamer ring.

Its pathway is protein degradation; proteasomal Pup-dependent pathway. Functionally, protein modifier that is covalently attached to lysine residues of substrate proteins, thereby targeting them for proteasomal degradation. The tagging system is termed pupylation. The sequence is that of Prokaryotic ubiquitin-like protein Pup from Bifidobacterium animalis subsp. lactis (strain AD011).